The following is a 134-amino-acid chain: Small ribosomal subunit protein uS9 (134 aa).

The segment at 113-134 (REVERKKYGLKKARRAPQFSKR) is disordered. A compositionally biased stretch (basic residues) spans 120–134 (YGLKKARRAPQFSKR).

It belongs to the universal ribosomal protein uS9 family.

The sequence is that of Small ribosomal subunit protein uS9 (rpsI) from Thermotoga maritima (strain ATCC 43589 / DSM 3109 / JCM 10099 / NBRC 100826 / MSB8).